Here is a 580-residue protein sequence, read N- to C-terminus: Arginine--tRNA ligase (580 aa).

The 'HIGH' region motif lies at 131–141 (ANPTGPMHVGH).

The protein belongs to the class-I aminoacyl-tRNA synthetase family. As to quaternary structure, monomer.

The protein localises to the cytoplasm. It carries out the reaction tRNA(Arg) + L-arginine + ATP = L-arginyl-tRNA(Arg) + AMP + diphosphate. The chain is Arginine--tRNA ligase from Cereibacter sphaeroides (strain KD131 / KCTC 12085) (Rhodobacter sphaeroides).